A 298-amino-acid chain; its full sequence is Ribosomal RNA small subunit methyltransferase A (298 aa).

S-adenosyl-L-methionine is bound by residues N30, V32, G57, E78, D108, and N126.

It belongs to the class I-like SAM-binding methyltransferase superfamily. rRNA adenine N(6)-methyltransferase family. RsmA subfamily.

The protein resides in the cytoplasm. The catalysed reaction is adenosine(1518)/adenosine(1519) in 16S rRNA + 4 S-adenosyl-L-methionine = N(6)-dimethyladenosine(1518)/N(6)-dimethyladenosine(1519) in 16S rRNA + 4 S-adenosyl-L-homocysteine + 4 H(+). Its function is as follows. Specifically dimethylates two adjacent adenosines (A1518 and A1519) in the loop of a conserved hairpin near the 3'-end of 16S rRNA in the 30S particle. May play a critical role in biogenesis of 30S subunits. The protein is Ribosomal RNA small subunit methyltransferase A of Cutibacterium acnes (strain DSM 16379 / KPA171202) (Propionibacterium acnes).